The following is a 141-amino-acid chain: Histone H2B (141 aa).

Residues 1-10 (MAPKAAEKKP) show a composition bias toward basic and acidic residues. A disordered region spans residues 1–49 (MAPKAAEKKPSTGGKAPAGGKAPAEKKEAGKKTAAAASGDKKKRGKTRK). Lysine 8 and lysine 9 each carry N6-acetyllysine; alternate. Residues lysine 8 and lysine 9 each participate in a glycyl lysine isopeptide (Lys-Gly) (interchain with G-Cter in SUMO); alternate cross-link. Low complexity predominate over residues 11 to 22 (STGGKAPAGGKA). Lysine 15 carries the N6-acetyllysine modification. Lysine 26 is subject to N6-acetyllysine; alternate. A Glycyl lysine isopeptide (Lys-Gly) (interchain with G-Cter in SUMO); alternate cross-link involves residue lysine 26. Lysine 27 participates in a covalent cross-link: Glycyl lysine isopeptide (Lys-Gly) (interchain with G-Cter in SUMO). A Glycyl lysine isopeptide (Lys-Gly) (interchain with G-Cter in ubiquitin) cross-link involves residue lysine 135.

Belongs to the histone H2B family. The nucleosome is a histone octamer containing two molecules each of H2A, H2B, H3 and H4 assembled in one H3-H4 heterotetramer and two H2A-H2B heterodimers. The octamer wraps approximately 147 bp of DNA. In terms of processing, monoubiquitinated by the ubc2-bre1 complex to form H2BK123ub1. H2BK123ub1 gives a specific tag for epigenetic transcriptional activation and is also prerequisite for H3K4me and H3K79me formation. H2BK123ub1 also modulates the formation of double-strand breaks during meiosis and is a prerequisite for DNA-damage checkpoint activation. Acetylated by gcn5 to form H2BK11ac and H2BK16ac. H2BK16ac can also be formed by esa1. Acetylation of N-terminal lysines and particularly formation of H2BK11acK16ac has a positive effect on transcription. Post-translationally, sumoylation to form H2BK6su or H2BK7su, and probably also H2BK16su or H2BK17su, occurs preferentially near the telomeres and represses gene transcription.

The protein resides in the nucleus. Its subcellular location is the chromosome. Core component of nucleosome. Nucleosomes wrap and compact DNA into chromatin, limiting DNA accessibility to the cellular machineries which require DNA as a template. Histones thereby play a central role in transcription regulation, DNA repair, DNA replication and chromosomal stability. DNA accessibility is regulated via a complex set of post-translational modifications of histones, also called histone code, and nucleosome remodeling. The sequence is that of Histone H2B (htb1) from Aspergillus oryzae (strain ATCC 42149 / RIB 40) (Yellow koji mold).